The primary structure comprises 1358 residues: DNA-directed RNA polymerase subunit beta (1358 aa).

This sequence belongs to the RNA polymerase beta chain family. The RNAP catalytic core consists of 2 alpha, 1 beta, 1 beta' and 1 omega subunit. When a sigma factor is associated with the core the holoenzyme is formed, which can initiate transcription.

The catalysed reaction is RNA(n) + a ribonucleoside 5'-triphosphate = RNA(n+1) + diphosphate. DNA-dependent RNA polymerase catalyzes the transcription of DNA into RNA using the four ribonucleoside triphosphates as substrates. This chain is DNA-directed RNA polymerase subunit beta, found in Francisella tularensis subsp. mediasiatica (strain FSC147).